Consider the following 86-residue polypeptide: Mu-theraphotoxin-Cg2a 1 (86 aa).

The first 21 residues, 1–21, serve as a signal peptide directing secretion; it reads MKVSVVITLAVLGIMFVWASA. Residues 22-50 constitute a propeptide that is removed on maturation; it reads AELEERGSDQRDSPAWLKSMERIFQSEER. Cystine bridges form between Cys-52/Cys-66, Cys-59/Cys-71, and Cys-65/Cys-78. Phe-84 is subject to Phenylalanine amide.

It belongs to the neurotoxin 10 (Hwtx-1) family. 37 (Jztx-31) subfamily. As to expression, expressed by the venom gland.

The protein localises to the secreted. Its function is as follows. Inhibits both peak current and fast inactivation of voltage-gated sodium channels (Nav) channels. Inhibits the inactivation of Nav on DRG neurons (EC(50)=1.77 uM) and peak current of cardiac myocytes (IC(50)=0.90 uM). The polypeptide is Mu-theraphotoxin-Cg2a 1 (Chilobrachys guangxiensis (Chinese earth tiger tarantula)).